Reading from the N-terminus, the 61-residue chain is Small ribosomal subunit protein uS14 (61 aa).

Zn(2+) contacts are provided by Cys-24, Cys-27, Cys-40, and Cys-43.

This sequence belongs to the universal ribosomal protein uS14 family. Zinc-binding uS14 subfamily. In terms of assembly, part of the 30S ribosomal subunit. Contacts proteins S3 and S10. Requires Zn(2+) as cofactor.

Binds 16S rRNA, required for the assembly of 30S particles and may also be responsible for determining the conformation of the 16S rRNA at the A site. The polypeptide is Small ribosomal subunit protein uS14 (Elusimicrobium minutum (strain Pei191)).